Consider the following 690-residue polypeptide: Tripartite terminase subunit 3 (690 aa).

The short motif at 226-233 (IPRRHGKT) is the Walker A motif element. The Walker B motif motif lies at 321 to 326 (LLFVDE). The active-site For ATPase activity is E326. Active-site for nuclease activity residues include D481, E555, and D667.

The protein belongs to the herpesviridae TRM3 protein family. Interacts with the terminase subunits TRM1 and TRM2. Interacts with portal protein.

The protein localises to the host nucleus. Its function is as follows. Component of the molecular motor that translocates viral genomic DNA in empty capsid during DNA packaging. Forms a tripartite terminase complex together with TRM1 and TRM2 in the host cytoplasm. Once the complex reaches the host nucleus, it interacts with the capsid portal vertex. This portal forms a ring in which genomic DNA is translocated into the capsid. TRM3 carries an RNase H-like nuclease activity that plays an important role for the cleavage of concatemeric viral DNA into unit length genomes. The protein is Tripartite terminase subunit 3 of Homo sapiens (Human).